A 135-amino-acid chain; its full sequence is uncharacterized protein (135 aa).

Belongs to the transcriptional regulatory CopG/NikR family.

This is an uncharacterized protein from Methanocaldococcus jannaschii (strain ATCC 43067 / DSM 2661 / JAL-1 / JCM 10045 / NBRC 100440) (Methanococcus jannaschii).